The primary structure comprises 75 residues: UPF0352 protein PMI0824 (75 aa).

It belongs to the UPF0352 family.

The polypeptide is UPF0352 protein PMI0824 (Proteus mirabilis (strain HI4320)).